A 185-amino-acid chain; its full sequence is Elongation factor P (185 aa).

The protein belongs to the elongation factor P family.

The protein resides in the cytoplasm. The protein operates within protein biosynthesis; polypeptide chain elongation. Its function is as follows. Involved in peptide bond synthesis. Stimulates efficient translation and peptide-bond synthesis on native or reconstituted 70S ribosomes in vitro. Probably functions indirectly by altering the affinity of the ribosome for aminoacyl-tRNA, thus increasing their reactivity as acceptors for peptidyl transferase. This is Elongation factor P from Burkholderia cenocepacia (strain HI2424).